Here is a 394-residue protein sequence, read N- to C-terminus: Elongation factor Tu 2 (394 aa).

The tr-type G domain maps to 10–204 (KPHVNVGTIG…HLDTYIPEPE (195 aa)). The interval 19-26 (GHVDHGKT) is G1. 19–26 (GHVDHGKT) contacts GTP. Position 26 (threonine 26) interacts with Mg(2+). Residues 60-64 (GITIN) form a G2 region. Residues 81-84 (DCPG) form a G3 region. GTP contacts are provided by residues 81–85 (DCPGH) and 136–139 (NKCD). Positions 136–139 (NKCD) are G4. The tract at residues 174–176 (SAL) is G5.

The protein belongs to the TRAFAC class translation factor GTPase superfamily. Classic translation factor GTPase family. EF-Tu/EF-1A subfamily. As to quaternary structure, monomer.

It is found in the cytoplasm. The catalysed reaction is GTP + H2O = GDP + phosphate + H(+). GTP hydrolase that promotes the GTP-dependent binding of aminoacyl-tRNA to the A-site of ribosomes during protein biosynthesis. The polypeptide is Elongation factor Tu 2 (Haemophilus influenzae (strain 86-028NP)).